A 613-amino-acid polypeptide reads, in one-letter code: AP-5 complex subunit mu (613 aa).

Positions 309–563 constitute an MHD domain; it reads KQRLLFTIHE…DYAKVSFKIV (255 aa). Residues 501–522 form a disordered region; that stretch reads SPLQSRRKGDGDDEESEDESAE. The segment covering 511–521 has biased composition (acidic residues); the sequence is GDDEESEDESA.

The protein belongs to the adaptor complexes medium subunit family. Probably part of the adaptor protein complex 5 (AP-5).

The protein resides in the cytoplasmic vesicle membrane. In Arabidopsis thaliana (Mouse-ear cress), this protein is AP-5 complex subunit mu (AP5M).